We begin with the raw amino-acid sequence, 348 residues long: Galanin receptor type 1 (348 aa).

Residues 1–34 lie on the Extracellular side of the membrane; that stretch reads MELAMVNLSEGNGSDPEPPAPESRPLFGIGVENF. Asparagine 7 and asparagine 12 each carry an N-linked (GlcNAc...) asparagine glycan. Residues 35–55 traverse the membrane as a helical segment; the sequence is ITLVVFGLIFAMGVLGNSLVI. At 56–70 the chain is on the cytoplasmic side; that stretch reads TVLARSKPGKPRSTT. A helical membrane pass occupies residues 71–91; it reads NLFILNLSIADLAYLLFCIPF. Residues 92–109 lie on the Extracellular side of the membrane; the sequence is QATVYALPTWVLGAFICK. A disulfide bridge connects residues cysteine 108 and cysteine 186. A helical membrane pass occupies residues 110-131; that stretch reads FIHYFFTVSMLVSIFTLAAMSV. Over 132–151 the chain is Cytoplasmic; it reads DRYVAIVHSRRSSSLRVSRN. The chain crosses the membrane as a helical span at residues 152–172; it reads ALLGVGFIWALSIAMASPVAY. The Extracellular portion of the chain corresponds to 173-197; that stretch reads HQRLFHRDSNQTFCWEQWPNKLHKK. Asparagine 182 carries an N-linked (GlcNAc...) asparagine glycan. The chain crosses the membrane as a helical span at residues 198 to 218; the sequence is AYVVCTFVFGYLLPLLLICFC. Topologically, residues 219–247 are cytoplasmic; sequence YAKVLNHLHKKLKNMSKKSEASKKKTAQT. Residues 248-268 form a helical membrane-spanning segment; it reads VLVVVVVFGISWLPHHVVHLW. Residues 269–270 lie on the Extracellular side of the membrane; it reads AE. The helical transmembrane segment at 271-291 threads the bilayer; it reads FGAFPLTPASFFFRITAHCLA. Residues 292 to 348 are Cytoplasmic-facing; it reads YSNSSVNPIIYAFLSENFRKAYKQVFKCHVCDESPRSETKENKSRMDTPPSTNCTHV. Residue cysteine 319 is the site of S-palmitoyl cysteine attachment. Basic and acidic residues predominate over residues 328–337; that stretch reads SETKENKSRM. The segment at 328–348 is disordered; it reads SETKENKSRMDTPPSTNCTHV.

The protein belongs to the G-protein coupled receptor 1 family. In terms of assembly, interacts with GRP39 AND HTR1A. Post-translationally, three cysteine residues are found in the C-terminus, at least one of which may be palmitoylated. In terms of tissue distribution, expression is detected in brain, spinal cord, heart and skeletal muscle.

Its subcellular location is the cell membrane. In terms of biological role, receptor for the hormone galanin. The activity of this receptor is mediated by G proteins that inhibit adenylate cyclase activity. The sequence is that of Galanin receptor type 1 (Galr1) from Mus musculus (Mouse).